The chain runs to 229 residues: Protein FAM3C (229 aa).

The first 24 residues, 1-24 (MRIAGAIKFVVAVALFLLTFYVIS), serve as a signal peptide directing secretion. 2 disulfides stabilise this stretch: cysteine 59–cysteine 87 and cysteine 65–cysteine 222. The GG-type lectin domain occupies 68–226 (KHFAFKIASG…VEMEGCIPQK (159 aa)).

This sequence belongs to the FAM3 family. Expressed in the retinal ganglion cell layer.

The protein localises to the secreted. In terms of biological role, involved in retinal laminar formation. This is Protein FAM3C (fam3c) from Xenopus laevis (African clawed frog).